A 391-amino-acid polypeptide reads, in one-letter code: 2,4,6-trihydroxybenzophenone synthase (391 aa).

Cys165 is a catalytic residue.

Belongs to the thiolase-like superfamily. Chalcone/stilbene synthases family. As to quaternary structure, homodimer. Expressed in young fruit pericarp.

The enzyme catalyses benzoyl-CoA + 3 malonyl-CoA + 2 H(+) = 2,4,6-trihydroxybenzophenone + 3 CO2 + 4 CoA. In terms of biological role, type III polyketide synthase involved in the biosynthesis of benzophenones and xanthones. Produces mainly 2,4,6-trihydroxybenzophenone together with minor amounts of tetraketide lactone, triketide lactone and diketide lactone. The preferred substrate is benzoyl-CoA, but can also use acetyl-CoA, phenylacetyl-CoA, hexanoyl-CoA, cinnamoyl-CoA, p-coumaroyl-CoA and salicoyl-CoA. The polypeptide is 2,4,6-trihydroxybenzophenone synthase (BPS) (Garcinia mangostana (Mangosteen)).